The chain runs to 663 residues: Rho GTPase-activating protein 18 (663 aa).

Residues 15-37 form a disordered region; it reads YHPSGKDQTVGNSHAKAGEEATS. A phosphoserine mark is found at Ser66 and Ser69. Thr158 carries the phosphothreonine modification. Disordered regions lie at residues 179 to 227 and 243 to 277; these read RESK…PAPE and QKES…TRIG. Composition is skewed to basic and acidic residues over residues 197-219 and 245-258; these read NENK…KLIP and ESSK…KGDD. Ser263 bears the Phosphoserine mark. The Rho-GAP domain maps to 324 to 523; it reads VPLTALLEQD…LLIKYQKLLW (200 aa). Ser610 carries the post-translational modification Phosphoserine.

Interacts with MPHOSPH6.

Its subcellular location is the cytoplasm. In terms of biological role, rho GTPase activating protein that suppresses F-actin polymerization by inhibiting Rho. Rho GTPase activating proteins act by converting Rho-type GTPases to an inactive GDP-bound state. Plays a key role in tissue tension and 3D tissue shape by regulating cortical actomyosin network formation. Acts downstream of YAP1 and inhibits actin polymerization, which in turn reduces nuclear localization of YAP1. Regulates cell shape, spreading, and migration. This is Rho GTPase-activating protein 18 from Homo sapiens (Human).